A 382-amino-acid polypeptide reads, in one-letter code: RNA binding protein fox-1 homolog 1 (382 aa).

The tract at residues 1–121 (MNCEREQLRG…NKSQPKRLHV (121 aa)) is disordered. Positions 70 to 87 (QTHSEQSPADTSAQTVSG) are enriched in polar residues. Residues 88 to 99 (TATQTDDAAPTD) show a composition bias toward low complexity. Residues 100-113 (GQPQTQPSENTENK) are compositionally biased toward polar residues. The region spanning 117 to 193 (KRLHVSNIPF…RKIEVNNATA (77 aa)) is the RRM domain. Arginine 317 carries the post-translational modification Asymmetric dimethylarginine. The tract at residues 357-382 (MPQGSSPSTDFRGAKLHTSRPLLSGS) is disordered.

Binds to the C-terminus of ATXN2.

It localises to the nucleus. The protein resides in the cytoplasm. Functionally, RNA-binding protein that regulates alternative splicing events by binding to 5'-UGCAUGU-3' elements. Prevents binding of U2AF2 to the 3'-splice site. Regulates alternative splicing of tissue-specific exons and of differentially spliced exons during erythropoiesis. This Pongo abelii (Sumatran orangutan) protein is RNA binding protein fox-1 homolog 1 (RBFOX1).